The chain runs to 451 residues: Gamma-aminobutyric acid receptor subunit alpha-2 (451 aa).

The signal sequence occupies residues Met1–Ala28. Residues Asn29–Lys249 lie on the Extracellular side of the membrane. N-linked (GlcNAc...) asparagine glycosylation is present at Asn38. Arg94 lines the 4-aminobutanoate pocket. Residue Asn138 is glycosylated (N-linked (GlcNAc...) asparagine). Thr157 is a 4-aminobutanoate binding site. Cys166 and Cys180 are joined by a disulfide. A helical transmembrane segment spans residues Ile250–Val270. Topologically, residues Ser271–Pro280 are cytoplasmic. The helical transmembrane segment at Ala281 to Ala300 threads the bilayer. Over Arg301–Thr311 the chain is Extracellular. A helical transmembrane segment spans residues Ala312–Ala332. The Cytoplasmic portion of the chain corresponds to Thr333–Met420. The helical transmembrane segment at Ser421 to Leu441 threads the bilayer. Residues Asn442–Pro451 lie on the Extracellular side of the membrane.

This sequence belongs to the ligand-gated ion channel (TC 1.A.9) family. Gamma-aminobutyric acid receptor (TC 1.A.9.5) subfamily. GABRA2 sub-subfamily. As to quaternary structure, heteropentamer, formed by a combination of alpha (GABRA1-6), beta (GABRB1-3), gamma (GABRG1-3), delta (GABRD), epsilon (GABRE), rho (GABRR1-3), pi (GABRP) and theta (GABRQ) subunits, each subunit exhibiting distinct physiological and pharmacological properties. Interacts with UBQLN1. Interacts with KIF21B. Interacts with LHFPL4. Interacts with SHISA7; interaction leads to the regulation of GABA(A) receptor trafficking, channel deactivation kinetics and pharmacology. Post-translationally, glycosylated.

The protein localises to the postsynaptic cell membrane. The protein resides in the cell membrane. Its subcellular location is the cytoplasmic vesicle membrane. It localises to the cell projection. It is found in the dendrite. It carries out the reaction chloride(in) = chloride(out). Its activity is regulated as follows. Activated by pentobarbital. Inhibited by the antagonist bicuculline. Alpha subunit of the heteropentameric ligand-gated chloride channel gated by gamma-aminobutyric acid (GABA), a major inhibitory neurotransmitter in the brain. GABA-gated chloride channels, also named GABA(A) receptors (GABAAR), consist of five subunits arranged around a central pore and contain GABA active binding site(s) located at the alpha and beta subunit interfaces. When activated by GABA, GABAARs selectively allow the flow of chloride anions across the cell membrane down their electrochemical gradient. Chloride influx into the postsynaptic neuron following GABAAR opening decreases the neuron ability to generate a new action potential, thereby reducing nerve transmission. The alpha-2 subunit exhibits synaptogenic activity together with beta-2 and very little to no activity together with beta-3, the gamma-2 subunit being necessary but not sufficient to induce rapid synaptic contacts formation. This Homo sapiens (Human) protein is Gamma-aminobutyric acid receptor subunit alpha-2.